A 215-amino-acid polypeptide reads, in one-letter code: ATP phosphoribosyltransferase (215 aa).

Belongs to the ATP phosphoribosyltransferase family. Short subfamily. As to quaternary structure, heteromultimer composed of HisG and HisZ subunits.

Its subcellular location is the cytoplasm. The catalysed reaction is 1-(5-phospho-beta-D-ribosyl)-ATP + diphosphate = 5-phospho-alpha-D-ribose 1-diphosphate + ATP. It participates in amino-acid biosynthesis; L-histidine biosynthesis; L-histidine from 5-phospho-alpha-D-ribose 1-diphosphate: step 1/9. Functionally, catalyzes the condensation of ATP and 5-phosphoribose 1-diphosphate to form N'-(5'-phosphoribosyl)-ATP (PR-ATP). Has a crucial role in the pathway because the rate of histidine biosynthesis seems to be controlled primarily by regulation of HisG enzymatic activity. This is ATP phosphoribosyltransferase from Lachnoclostridium phytofermentans (strain ATCC 700394 / DSM 18823 / ISDg) (Clostridium phytofermentans).